The primary structure comprises 1038 residues: Kinesin-like protein KIF17 (1038 aa).

Residues serine 5–isoleucine 335 enclose the Kinesin motor domain. Glycine 91–serine 98 provides a ligand contact to ATP. Residues lysine 346–valine 470 adopt a coiled-coil conformation. Disordered stretches follow at residues threonine 379–aspartate 401, leucine 503–glutamate 559, and aspartate 636–proline 657. Polar residues-rich tracts occupy residues serine 533–serine 551 and aspartate 636–serine 651. Residues glutamine 748–threonine 855 are a coiled coil. Disordered regions lie at residues valine 916–glutamine 940 and methionine 976–leucine 1038. The segment covering asparagine 983–proline 1000 has biased composition (low complexity).

It belongs to the TRAFAC class myosin-kinesin ATPase superfamily. Kinesin family. In terms of assembly, homodimer. Interacts with APBA1 (via PDZ domain); the interaction is direct and is required for association of KIF17 with the cargo that is to be transported. Interacts with IFT B complex components IFT52 and IFT57. Interacts with IFT70B. Interacts with PIWIL1. Interacts with TBATA. In terms of tissue distribution, highly expressed in the gray matter of the brain, especially in the hippocampus.

It is found in the cytoplasm. Its subcellular location is the cytoskeleton. It localises to the cell projection. The protein resides in the cilium. The protein localises to the dendrite. Functionally, dendrite-specific motor protein which, in association with the Apba1-containing complex (LIN-10-LIN-2-LIN-7 complex), transports vesicles containing N-methyl-D-aspartate (NMDA) receptor subunit NR2B along microtubules. The protein is Kinesin-like protein KIF17 (Kif17) of Mus musculus (Mouse).